Reading from the N-terminus, the 360-residue chain is GTPase Obg (360 aa).

The region spanning 1-156 is the Obg domain; that stretch reads MFVDSVEIII…KCVRLELKLI (156 aa). An OBG-type G domain is found at 157-360; that stretch reads ADIGLVGFPN…LKFVLLEALP (204 aa). GTP-binding positions include 163-170, 188-192, 210-213, 279-282, and 341-343; these read GFPNAGKS, FTTLV, DIPG, NKCD, and SAV. Mg(2+) contacts are provided by serine 170 and threonine 190.

Belongs to the TRAFAC class OBG-HflX-like GTPase superfamily. OBG GTPase family. In terms of assembly, monomer. Mg(2+) serves as cofactor.

It localises to the cytoplasm. Functionally, an essential GTPase which binds GTP, GDP and possibly (p)ppGpp with moderate affinity, with high nucleotide exchange rates and a fairly low GTP hydrolysis rate. Plays a role in control of the cell cycle, stress response, ribosome biogenesis and in those bacteria that undergo differentiation, in morphogenesis control. The polypeptide is GTPase Obg (Helicobacter pylori (strain ATCC 700392 / 26695) (Campylobacter pylori)).